Reading from the N-terminus, the 238-residue chain is Zinc import ATP-binding protein ZnuC (238 aa).

The region spanning 5-220 is the ABC transporter domain; that stretch reads IQLNNISVNF…SEFIAIFGNI (216 aa). Position 37 to 44 (37 to 44) interacts with ATP; it reads GPNGAGKS.

The protein belongs to the ABC transporter superfamily. Zinc importer (TC 3.A.1.15.5) family. As to quaternary structure, the complex is composed of two ATP-binding proteins (ZnuC), two transmembrane proteins (ZnuB) and a solute-binding protein (ZnuA).

The protein resides in the cell membrane. It catalyses the reaction Zn(2+)(out) + ATP(in) + H2O(in) = Zn(2+)(in) + ADP(in) + phosphate(in) + H(+)(in). Functionally, part of the ABC transporter complex ZnuABC involved in zinc import. Responsible for energy coupling to the transport system. The protein is Zinc import ATP-binding protein ZnuC of Buchnera aphidicola subsp. Baizongia pistaciae (strain Bp).